Here is a 1076-residue protein sequence, read N- to C-terminus: DNA-directed RNA polymerase subunit beta (1076 aa).

It belongs to the RNA polymerase beta chain family. As to quaternary structure, in plastids the minimal PEP RNA polymerase catalytic core is composed of four subunits: alpha, beta, beta', and beta''. When a (nuclear-encoded) sigma factor is associated with the core the holoenzyme is formed, which can initiate transcription.

Its subcellular location is the plastid. The protein localises to the chloroplast. The enzyme catalyses RNA(n) + a ribonucleoside 5'-triphosphate = RNA(n+1) + diphosphate. Its function is as follows. DNA-dependent RNA polymerase catalyzes the transcription of DNA into RNA using the four ribonucleoside triphosphates as substrates. This Agrostis stolonifera (Creeping bentgrass) protein is DNA-directed RNA polymerase subunit beta.